Reading from the N-terminus, the 151-residue chain is Putative pre-16S rRNA nuclease (151 aa).

Belongs to the YqgF nuclease family.

The protein resides in the cytoplasm. Functionally, could be a nuclease involved in processing of the 5'-end of pre-16S rRNA. The sequence is that of Putative pre-16S rRNA nuclease from Bifidobacterium longum subsp. infantis (strain ATCC 15697 / DSM 20088 / JCM 1222 / NCTC 11817 / S12).